Reading from the N-terminus, the 173-residue chain is Protein MOTHER of FT and TFL1 (173 aa).

Position 2 is an N-acetylalanine (A2).

This sequence belongs to the phosphatidylethanolamine-binding protein family. In terms of tissue distribution, expressed in gametophytes and developing seeds.

It is found in the cytoplasm. Functionally, may form complexes with phosphorylated ligands by interfering with kinases and their effectors. Regulates seed germination via the abscisic acid (ABA) and gibberellic acid (GA)signaling pathways. During seed germination, MFT expression is directly repressed by ABI3 or promoted by ABI5 in the ABA signaling pathway. Involved in a negative feedback regulation of ABA signaling. Promotes embryo growth by direct repression of ABI5. In the GA signaling pathway, MFT expression is promoted by the DELLA protein RGL2 during seed germination. May regulate seed germination and fertility through the brassinosteroid (BR) signaling pathway. The polypeptide is Protein MOTHER of FT and TFL1 (MFT) (Arabidopsis thaliana (Mouse-ear cress)).